The chain runs to 394 residues: Probable cytosolic iron-sulfur protein assembly protein 1 (394 aa).

WD repeat units lie at residues 10–49, 56–108, 144–184, 191–230, 237–284, 313–352, and 359–394; these read AHND…NFPL, AHKR…EQDS, GHEN…EEFE, DHQH…DDWS, GHGG…TEQI, IHKY…KWEI, and AHGV…IWEP.

Belongs to the WD repeat CIA1 family. In terms of assembly, interacts with NAR1.

The protein resides in the cytoplasm. It localises to the nucleus. In terms of biological role, essential component of the cytosolic iron-sulfur (Fe/S) protein assembly machinery. Required for the maturation of extramitochondrial Fe/S proteins. This chain is Probable cytosolic iron-sulfur protein assembly protein 1, found in Debaryomyces hansenii (strain ATCC 36239 / CBS 767 / BCRC 21394 / JCM 1990 / NBRC 0083 / IGC 2968) (Yeast).